Consider the following 117-residue polypeptide: Big defensin (117 aa).

Residues 1-23 (MEKKTAYCLLFLVLLVPYTALGA) form the signal peptide. The propeptide occupies 24-33 (VLKRAPAKKE). Disulfide bonds link C82–C112, C89–C107, and C93–C113.

The protein belongs to the big defensin family.

Its subcellular location is the secreted. Functionally, significantly inhibits the growth of Gram-negative and Gram-positive bacteria and fungi in vitro. The sequence is that of Big defensin from Branchiostoma belcheri (Amphioxus).